We begin with the raw amino-acid sequence, 213 residues long: tRNA (guanine-N(7)-)-methyltransferase (213 aa).

S-adenosyl-L-methionine contacts are provided by E44, D69, D96, and D118. The active site involves D118. A substrate-binding site is contributed by K122. Residues 124–129 (RHEKRR) form an interaction with RNA region. Residues D154 and 191-194 (TEYE) each bind substrate.

This sequence belongs to the class I-like SAM-binding methyltransferase superfamily. TrmB family.

It catalyses the reaction guanosine(46) in tRNA + S-adenosyl-L-methionine = N(7)-methylguanosine(46) in tRNA + S-adenosyl-L-homocysteine. It participates in tRNA modification; N(7)-methylguanine-tRNA biosynthesis. Its function is as follows. Catalyzes the formation of N(7)-methylguanine at position 46 (m7G46) in tRNA. The polypeptide is tRNA (guanine-N(7)-)-methyltransferase (Streptococcus thermophilus (strain CNRZ 1066)).